The following is a 202-amino-acid chain: Imidazoleglycerol-phosphate dehydratase (202 aa).

Belongs to the imidazoleglycerol-phosphate dehydratase family.

It is found in the cytoplasm. It catalyses the reaction D-erythro-1-(imidazol-4-yl)glycerol 3-phosphate = 3-(imidazol-4-yl)-2-oxopropyl phosphate + H2O. Its pathway is amino-acid biosynthesis; L-histidine biosynthesis; L-histidine from 5-phospho-alpha-D-ribose 1-diphosphate: step 6/9. In Synechococcus sp. (strain WH7803), this protein is Imidazoleglycerol-phosphate dehydratase.